Here is a 258-residue protein sequence, read N- to C-terminus: Tritrans,polycis-undecaprenyl-diphosphate synthase (geranylgeranyl-diphosphate specific) (258 aa).

Asp-37 is a catalytic residue. Asp-37 lines the Mg(2+) pocket. Substrate is bound by residues 38–41 (GNRR), His-54, and 82–84 (STE). Asn-85 serves as the catalytic Proton acceptor. Residues Phe-86, Arg-88, Arg-207, and 213–215 (RIS) each bind substrate. Glu-226 lines the Mg(2+) pocket.

Belongs to the UPP synthase family. Homodimer. Mg(2+) is required as a cofactor.

It catalyses the reaction geranylgeranyl diphosphate + 7 isopentenyl diphosphate = tri-trans,hepta-cis-undecaprenyl diphosphate + 7 diphosphate. Functionally, catalyzes the sequential condensation of isopentenyl diphosphate (IPP) with geranylgeranyl diphosphate (GGPP) to yield (2Z,6Z,10Z,14Z,18Z,22Z,26Z,30E,34E,38E)-undecaprenyl diphosphate (tritrans,heptacis-UPP). It is probably the precursor of glycosyl carrier lipids. In Thermoplasma acidophilum (strain ATCC 25905 / DSM 1728 / JCM 9062 / NBRC 15155 / AMRC-C165), this protein is Tritrans,polycis-undecaprenyl-diphosphate synthase (geranylgeranyl-diphosphate specific).